The following is a 721-amino-acid chain: Teichoic acid poly(glycerol phosphate) polymerase (721 aa).

Residues Trp-443 to Pro-447, Arg-511, Pro-545 to Thr-546, Arg-582 to His-584, Ser-624 to Ser-625, and Asp-629 each bind CDP-glycerol.

Belongs to the CDP-glycerol glycerophosphotransferase family.

Its subcellular location is the cell membrane. The catalysed reaction is 4-O-[(2R)-glycerylphospho]-N-acetyl-beta-D-mannosaminyl-(1-&gt;4)-N-acetyl-alpha-D-glucosaminyl di-trans,octa-cis-undecaprenyl diphosphate + n CDP-glycerol = 4-O-{[(2R)-1-glycerylphospho](n)-(2R)-1-glycerylphospho}-N-acetyl-beta-D-mannosaminyl-(1-&gt;4)-N-acetyl-alpha-D-glucosaminyl undecaprenyl diphosphate + n CMP + n H(+). The protein operates within cell wall biogenesis; poly(glycerol phosphate) teichoic acid biosynthesis. In terms of biological role, responsible for the polymerization of the main chain of the major teichoic acid by sequential transfer of glycerol phosphate units from CDP-glycerol to the disaccharide linkage unit. Synthesizes polymers of approximately 35 glycerol phosphate units in length. The protein is Teichoic acid poly(glycerol phosphate) polymerase of Staphylococcus epidermidis (strain ATCC 35984 / DSM 28319 / BCRC 17069 / CCUG 31568 / BM 3577 / RP62A).